The primary structure comprises 118 residues: Small ribosomal subunit protein uS13 (118 aa).

The segment at 94-118 (GLPLRGQRTRTNARTRKGPRRPIRK) is disordered.

Belongs to the universal ribosomal protein uS13 family. As to quaternary structure, part of the 30S ribosomal subunit. Forms a loose heterodimer with protein S19. Forms two bridges to the 50S subunit in the 70S ribosome.

Functionally, located at the top of the head of the 30S subunit, it contacts several helices of the 16S rRNA. In the 70S ribosome it contacts the 23S rRNA (bridge B1a) and protein L5 of the 50S subunit (bridge B1b), connecting the 2 subunits; these bridges are implicated in subunit movement. Contacts the tRNAs in the A and P-sites. This Thioalkalivibrio sulfidiphilus (strain HL-EbGR7) protein is Small ribosomal subunit protein uS13.